The following is a 148-amino-acid chain: UPF0260 protein Sfri_1740 (148 aa).

This sequence belongs to the UPF0260 family.

In Shewanella frigidimarina (strain NCIMB 400), this protein is UPF0260 protein Sfri_1740.